The following is a 336-amino-acid chain: DNA repair protein XRCC4 (336 aa).

An interaction with IFFO1 region spans residues M1–G213. S53 carries the post-translational modification Phosphoserine; by PRKDC. Coiled-coil stretches lie at residues L131–C165 and L184–E212. Residues F180–G213 are interaction with LIG4. A Phosphoserine; by PRKDC modification is found at S193. A Glycyl lysine isopeptide (Lys-Gly) (interchain with G-Cter in SUMO) cross-link involves residue K210. The segment at E212–A249 is disordered. A Phosphotyrosine modification is found at Y229. Positions Y229–N239 are enriched in acidic residues. S232 carries the post-translational modification Phosphoserine. At T233 the chain carries Phosphothreonine; by CK2. Phosphoserine occurs at positions 237 and 256. A Phosphoserine; by PRKDC modification is found at S260. A disordered region spans residues T264–I336. The Nuclear localization signal signature appears at R270 to R275. Residue K296 forms a Glycyl lysine isopeptide (Lys-Gly) (interchain with G-Cter in ubiquitin) linkage. Phosphoserine; by PRKDC occurs at positions 303, 304, 315, and 320. Residues E317 to P329 are compositionally biased toward polar residues. T323 is subject to Phosphothreonine; by PRKDC. Residues S327 and S328 each carry the phosphoserine; by PRKDC modification.

This sequence belongs to the XRCC4-XLF family. XRCC4 subfamily. In terms of assembly, homodimer and homotetramer in solution. Interacts with NHEJ1/XLF; the interaction is direct and is mediated via a head-to-head interaction between N-terminal head regions. Interacts with LIG4; the LIG4-XRCC4 subcomplex has a 1:2 stoichiometry and XRCC4 is required for LIG4 stability. Component of the core long-range non-homologous end joining (NHEJ) complex (also named DNA-PK complex) composed of PRKDC, LIG4, XRCC4, XRCC6/Ku70, XRCC5/Ku86 and NHEJ1/XLF. Additional component of the NHEJ complex includes PAXX. Following autophosphorylation, PRKDC dissociates from DNA, leading to formation of the short-range NHEJ complex, composed of LIG4, XRCC4, XRCC6/Ku70, XRCC5/Ku86 and NHEJ1/XLF. Interacts with PRKDC; the interaction is direct. Interacts with XRCC6/Ku70; the interaction is direct. Interacts with APTX and APLF. Forms a heterotetramer with IFFO1; the interaction involves LIG4-free XRCC4 and leads to the relocalization of IFFO1 to the sites of DNA damage. Interacts with PNKP; mainly interacts with PNKP when phosphorylated at Thr-233, but is also able to interact at much lower level with PNKP when not unphosphorylated. Interacts with POLL (DNA polymerase lambda). As to quaternary structure, interacts with XKR4; interacts with the processed form of XKR4, which is cleaved by caspase. Post-translationally, phosphorylated by PRKDC at the C-terminus in response to DNA damage; Ser-260 and Ser-320 constitute the main phosphorylation sites. Phosphorylations by PRKDC at the C-terminus of XRCC4 and NHEJ1/XLF are highly redundant and regulate ability of the XRCC4-NHEJ1/XLF subcomplex to bridge DNA. Phosphorylation by PRKDC does not prevent interaction with NHEJ1/XLF but disrupts ability to bridge DNA and promotes detachment from DNA. Phosphorylation at Ser-327 and Ser-328 by PRKDC promotes recognition by the SCF(FBXW7) complex and subsequent ubiquitination via 'Lys-63'-linked ubiquitin. Phosphorylation at Thr-233 by CK2 promotes interaction with PNKP; regulating PNKP activity and localization to DNA damage sites. Phosphorylation by CK2 promotes interaction with APTX. In terms of processing, ubiquitinated at Lys-296 by the SCF(FBXW7) complex via 'Lys-63'-linked ubiquitination, thereby promoting double-strand break repair: the SCF(FBXW7) complex specifically recognizes XRCC4 when phosphorylated at Ser-327 and Ser-328 by PRKDC, and 'Lys-63'-linked ubiquitination facilitates DNA non-homologous end joining (NHEJ) by enhancing association with XRCC5/Ku80 and XRCC6/Ku70. Monoubiquitinated. Undergoes proteolytic processing by caspase-3 (CASP3). This generates the protein XRCC4, C-terminus (XRCC4/C), which translocates to the cytoplasm and activates phospholipid scramblase activity of XKR4, thereby promoting phosphatidylserine exposure on apoptotic cell surface. In terms of tissue distribution, widely expressed.

It is found in the nucleus. Its subcellular location is the chromosome. It localises to the cytoplasm. DNA non-homologous end joining (NHEJ) core factor, required for double-strand break repair and V(D)J recombination. Acts as a scaffold protein that regulates recruitment of other proteins to DNA double-strand breaks (DSBs). Associates with NHEJ1/XLF to form alternating helical filaments that bridge DNA and act like a bandage, holding together the broken DNA until it is repaired. The XRCC4-NHEJ1/XLF subcomplex binds to the DNA fragments of a DSB in a highly diffusive manner and robustly bridges two independent DNA molecules, holding the broken DNA fragments in close proximity to one other. The mobility of the bridges ensures that the ends remain accessible for further processing by other repair factors. Plays a key role in the NHEJ ligation step of the broken DNA during DSB repair via direct interaction with DNA ligase IV (LIG4): the LIG4-XRCC4 subcomplex reseals the DNA breaks after the gap filling is completed. XRCC4 stabilizes LIG4, regulates its subcellular localization and enhances LIG4's joining activity. Binding of the LIG4-XRCC4 subcomplex to DNA ends is dependent on the assembly of the DNA-dependent protein kinase complex DNA-PK to these DNA ends. Promotes displacement of PNKP from processed strand break termini. In terms of biological role, acts as an activator of the phospholipid scramblase activity of XKR4. This form, which is generated upon caspase-3 (CASP3) cleavage, translocates into the cytoplasm and interacts with XKR4, thereby promoting phosphatidylserine scramblase activity of XKR4 and leading to phosphatidylserine exposure on apoptotic cell surface. This Homo sapiens (Human) protein is DNA repair protein XRCC4.